Consider the following 147-residue polypeptide: Fluoride-specific ion channel FluC 1 (147 aa).

4 consecutive transmembrane segments (helical) span residues 29-49 (YVYIFIGGALGALLRYLISFL), 61-81 (IANLTGAFVMGLLTALTIAFF), 90-110 (AITTGFLGALTTFSTFQLELI), and 118-138 (FITLLLYAVTSYVFGILLCYV). Na(+) contacts are provided by Gly97 and Thr100.

The protein belongs to the fluoride channel Fluc/FEX (TC 1.A.43) family.

The protein resides in the cell membrane. The catalysed reaction is fluoride(in) = fluoride(out). With respect to regulation, na(+) is not transported, but it plays an essential structural role and its presence is essential for fluoride channel function. In terms of biological role, fluoride-specific ion channel. Important for reducing fluoride concentration in the cell, thus reducing its toxicity. The polypeptide is Fluoride-specific ion channel FluC 1 (Staphylococcus aureus (strain MRSA252)).